Here is a 101-residue protein sequence, read N- to C-terminus: Thyrotropin subunit beta (101 aa).

Disulfide bonds link C2/C88, C10/C66, C14/C68, and C71/C78. N-linked (GlcNAc...) asparagine glycosylation is present at N6.

The protein belongs to the glycoprotein hormones subunit beta family. In terms of assembly, heterodimer of a common alpha chain and a unique beta chain which confers biological specificity to thyrotropin, lutropin, follitropin and gonadotropin.

The protein localises to the secreted. Functionally, indispensable for the control of thyroid structure and metabolism. The sequence is that of Thyrotropin subunit beta (TSHB) from Phodopus sungorus (Striped hairy-footed hamster).